The following is a 119-amino-acid chain: Protein TusC (119 aa).

It belongs to the DsrF/TusC family. As to quaternary structure, heterohexamer, formed by a dimer of trimers. The hexameric TusBCD complex contains 2 copies each of TusB, TusC and TusD. The TusBCD complex interacts with TusE.

It is found in the cytoplasm. Functionally, part of a sulfur-relay system required for 2-thiolation of 5-methylaminomethyl-2-thiouridine (mnm(5)s(2)U) at tRNA wobble positions. The polypeptide is Protein TusC (Escherichia fergusonii (strain ATCC 35469 / DSM 13698 / CCUG 18766 / IAM 14443 / JCM 21226 / LMG 7866 / NBRC 102419 / NCTC 12128 / CDC 0568-73)).